Here is a 244-residue protein sequence, read N- to C-terminus: Ferredoxin--NADP reductase B (244 aa).

The FAD-binding FR-type domain occupies 4–106 (AEPFEARLVA…VGPHGLFTRD (103 aa)). FAD contacts are provided by residues 55-58 (RAYS) and Thr-120.

This sequence belongs to the ferredoxin--NADP reductase type 1 family. FAD serves as cofactor.

The enzyme catalyses 2 reduced [4Fe-4S]-[ferredoxin] + NADP(+) + H(+) = 2 oxidized [4Fe-4S]-[ferredoxin] + NADPH. Functionally, transports electrons between NADPH and ferredoxin. Can transfer electrons to ferredoxins Fdx2 and Fdx8. Prefers NADPH to NADH. The polypeptide is Ferredoxin--NADP reductase B (Sorangium cellulosum (strain So ce56) (Polyangium cellulosum (strain So ce56))).